The primary structure comprises 194 residues: Crossover junction endodeoxyribonuclease RuvC (194 aa).

Active-site residues include D7, E68, and D141. D7, E68, and D141 together coordinate Mg(2+). Residues 162-194 (GGEREQHLTAAQRQWAEAAQNSTRRRKNSDRGM) are disordered. Residues 184–194 (TRRRKNSDRGM) show a composition bias toward basic residues.

The protein belongs to the RuvC family. In terms of assembly, homodimer which binds Holliday junction (HJ) DNA. The HJ becomes 2-fold symmetrical on binding to RuvC with unstacked arms; it has a different conformation from HJ DNA in complex with RuvA. In the full resolvosome a probable DNA-RuvA(4)-RuvB(12)-RuvC(2) complex forms which resolves the HJ. Mg(2+) serves as cofactor.

Its subcellular location is the cytoplasm. The catalysed reaction is Endonucleolytic cleavage at a junction such as a reciprocal single-stranded crossover between two homologous DNA duplexes (Holliday junction).. Functionally, the RuvA-RuvB-RuvC complex processes Holliday junction (HJ) DNA during genetic recombination and DNA repair. Endonuclease that resolves HJ intermediates. Cleaves cruciform DNA by making single-stranded nicks across the HJ at symmetrical positions within the homologous arms, yielding a 5'-phosphate and a 3'-hydroxyl group; requires a central core of homology in the junction. The consensus cleavage sequence is 5'-(A/T)TT(C/G)-3'. Cleavage occurs on the 3'-side of the TT dinucleotide at the point of strand exchange. HJ branch migration catalyzed by RuvA-RuvB allows RuvC to scan DNA until it finds its consensus sequence, where it cleaves and resolves the cruciform DNA. This is Crossover junction endodeoxyribonuclease RuvC from Bifidobacterium longum subsp. infantis (strain ATCC 15697 / DSM 20088 / JCM 1222 / NCTC 11817 / S12).